Here is a 222-residue protein sequence, read N- to C-terminus: Iodotyrosine deiodinase (222 aa).

FMN is bound by residues 34–38 and 61–62; these read RRTVR and PS. 3-iodo-L-tyrosine contacts are provided by glutamate 91, tyrosine 95, and lysine 116. Residues 171 to 173 and arginine 212 contribute to the FMN site; that span reads THT.

This sequence belongs to the nitroreductase family. Homodimer. It depends on FMN as a cofactor.

It catalyses the reaction 2 iodide + L-tyrosine + 2 NADP(+) = 3,5-diiodo-L-tyrosine + 2 NADPH + H(+). The enzyme catalyses iodide + L-tyrosine + NADP(+) = 3-iodo-L-tyrosine + NADPH. The catalysed reaction is 3-iodo-L-tyrosine + iodide + NADP(+) = 3,5-diiodo-L-tyrosine + NADPH + H(+). It carries out the reaction L-tyrosine + chloride + NADP(+) = 3-chloro-L-tyrosine + NADPH. It catalyses the reaction bromide + L-tyrosine + NADP(+) = 3-bromo-L-tyrosine + NADPH. In terms of biological role, catalyzes the dehalogenation of halotyrosines such as 3-iodo-L-tyrosine and 3,5-diiodo-L-tyrosine. Likely to also catalyze the dehalogenation of other halotyrosines such as 3-bromo-L-tyrosine, 3-chloro-L-tyrosine and 3-iodo-L-tyrosine. Activity towards 3-iodo-L-tyrosine is much stronger than activity towards 3,5-diiodo-L-tyrosine and 2-iodophenol. The sequence is that of Iodotyrosine deiodinase from Haliscomenobacter hydrossis (strain ATCC 27775 / DSM 1100 / LMG 10767 / O).